The following is a 428-amino-acid chain: Dihydroorotase (428 aa).

Zn(2+) contacts are provided by His-59 and His-61. Residues His-61 to Arg-63 and Asn-93 contribute to the substrate site. 3 residues coordinate Zn(2+): Asp-151, His-178, and His-231. Asn-277 lines the substrate pocket. Asp-304 contacts Zn(2+). Asp-304 is an active-site residue. Residues His-308 and Phe-322–Gly-323 contribute to the substrate site.

The protein belongs to the metallo-dependent hydrolases superfamily. DHOase family. Class I DHOase subfamily. Zn(2+) serves as cofactor.

The enzyme catalyses (S)-dihydroorotate + H2O = N-carbamoyl-L-aspartate + H(+). The protein operates within pyrimidine metabolism; UMP biosynthesis via de novo pathway; (S)-dihydroorotate from bicarbonate: step 3/3. Functionally, catalyzes the reversible cyclization of carbamoyl aspartate to dihydroorotate. This is Dihydroorotase from Bacillus cereus (strain ZK / E33L).